Reading from the N-terminus, the 544-residue chain is Chaperonin GroEL (544 aa).

Residues threonine 30–proline 33, lysine 51, aspartate 87–threonine 91, glycine 415, and aspartate 495 each bind ATP.

It belongs to the chaperonin (HSP60) family. In terms of assembly, forms a cylinder of 14 subunits composed of two heptameric rings stacked back-to-back. Interacts with the co-chaperonin GroES.

It is found in the cytoplasm. It catalyses the reaction ATP + H2O + a folded polypeptide = ADP + phosphate + an unfolded polypeptide.. Functionally, together with its co-chaperonin GroES, plays an essential role in assisting protein folding. The GroEL-GroES system forms a nano-cage that allows encapsulation of the non-native substrate proteins and provides a physical environment optimized to promote and accelerate protein folding. This is Chaperonin GroEL from Methylobacillus flagellatus (strain ATCC 51484 / DSM 6875 / VKM B-1610 / KT).